Reading from the N-terminus, the 315-residue chain is Thymidylate synthase (315 aa).

DUMP-binding positions include arginine 29 and 156 to 157; that span reads RR. The active-site Nucleophile is the cysteine 176. DUMP contacts are provided by residues 213–216, asparagine 224, and 254–256; these read RSCD and HVY. Residue aspartate 216 participates in (6R)-5,10-methylene-5,6,7,8-tetrahydrofolate binding.

Belongs to the thymidylate synthase family. Homodimer.

It carries out the reaction dUMP + (6R)-5,10-methylene-5,6,7,8-tetrahydrofolate = 7,8-dihydrofolate + dTMP. It functions in the pathway pyrimidine metabolism; dTTP biosynthesis. In Candida albicans (strain SC5314 / ATCC MYA-2876) (Yeast), this protein is Thymidylate synthase (TMP1).